The sequence spans 356 residues: OVARIAN TUMOR DOMAIN-containing deubiquitinating enzyme 10 (356 aa).

The interval 86–117 (DYSHQNQQQQHQQEGYTNNYSNNNNGYAWNDQ) is disordered. Residues 89–115 (HQNQQQQHQQEGYTNNYSNNNNGYAWN) show a composition bias toward low complexity. The region spanning 213–337 (FTEVKVPGDG…EVHYNAIYLN (125 aa)) is the OTU domain. Residue aspartate 221 is part of the active site. Cysteine 224 acts as the Nucleophile in catalysis. Histidine 330 is a catalytic residue.

The protein belongs to the peptidase C85 family.

The catalysed reaction is Thiol-dependent hydrolysis of ester, thioester, amide, peptide and isopeptide bonds formed by the C-terminal Gly of ubiquitin (a 76-residue protein attached to proteins as an intracellular targeting signal).. Hydrolase that can remove conjugated ubiquitin from proteins in vitro and may therefore play an important regulatory role at the level of protein turnover by preventing degradation. Cysteine protease with a preference for 'Lys-63' over 'Lys-48' over 'Met-1' -linked ubiquitin (UB) tetramers as substrates. Also cleaves RUB-GST fusion. The polypeptide is OVARIAN TUMOR DOMAIN-containing deubiquitinating enzyme 10 (Arabidopsis thaliana (Mouse-ear cress)).